Here is a 255-residue protein sequence, read N- to C-terminus: 5'-nucleotidase SurE (255 aa).

4 residues coordinate a divalent metal cation: aspartate 8, aspartate 9, serine 40, and asparagine 93.

This sequence belongs to the SurE nucleotidase family. A divalent metal cation serves as cofactor.

Its subcellular location is the cytoplasm. The catalysed reaction is a ribonucleoside 5'-phosphate + H2O = a ribonucleoside + phosphate. Its function is as follows. Nucleotidase that shows phosphatase activity on nucleoside 5'-monophosphates. This chain is 5'-nucleotidase SurE, found in Rhodopseudomonas palustris (strain BisB5).